The primary structure comprises 562 residues: Glutamine--tRNA ligase (562 aa).

The short motif at 35–45 (PEPNGYLHIGH) is the 'HIGH' region element. ATP-binding positions include 36–38 (EPN) and 42–48 (HIGHAKS). Positions 68 and 213 each coordinate L-glutamine. ATP contacts are provided by residues threonine 232 and 264 to 265 (RL). A 'KMSKS' region motif is present at residues 271-275 (ITSKR).

It belongs to the class-I aminoacyl-tRNA synthetase family. In terms of assembly, monomer.

Its subcellular location is the cytoplasm. It carries out the reaction tRNA(Gln) + L-glutamine + ATP = L-glutaminyl-tRNA(Gln) + AMP + diphosphate. The polypeptide is Glutamine--tRNA ligase (Neisseria gonorrhoeae (strain ATCC 700825 / FA 1090)).